The sequence spans 492 residues: Probable cytochrome P450 313a1 (492 aa).

Cys-438 is a binding site for heme.

This sequence belongs to the cytochrome P450 family. Heme is required as a cofactor.

It localises to the endoplasmic reticulum membrane. The protein localises to the microsome membrane. Its function is as follows. May be involved in the metabolism of insect hormones and in the breakdown of synthetic insecticides. This chain is Probable cytochrome P450 313a1 (Cyp313a1), found in Drosophila melanogaster (Fruit fly).